The primary structure comprises 265 residues: Palmitoyltransferase ZDHHC21 (265 aa).

Residues 1–16 lie on the Cytoplasmic side of the membrane; the sequence is MGLRIHFVVDPHGWCC. The chain crosses the membrane as a helical span at residues 17 to 37; that stretch reads MGLIVFVWLYNIVLIPKIVLF. Over 38-44 the chain is Extracellular; that stretch reads PHYEEGH. A helical membrane pass occupies residues 45–65; the sequence is IPGILIIIFYGISIFCLVALV. The Cytoplasmic segment spans residues 66 to 133; that stretch reads RASITDPGRL…NNCVGEDNHW (68 aa). Residues 90-140 form the DHHC domain; the sequence is ELCNKCNLMRPKRSHHCSRCGHCVRRMDHHCPWINNCVGEDNHWLFLQLCF. The S-palmitoyl cysteine intermediate role is filled by Cys-120. The chain crosses the membrane as a helical span at residues 134–154; sequence LFLQLCFYTELLTCYALMFSF. At 155 to 185 the chain is on the extracellular side; it reads CHYYYFLPLKKRNLDLFVFRHELAIMRLAAF. The chain crosses the membrane as a helical span at residues 186 to 206; the sequence is MGITMLVGITGLFYTQLIGII. Over 207 to 265 the chain is Cytoplasmic; sequence TDTTSIEKMSNCCEDISRPRKPWQQTFSEVFGTRWKILWFIPFRQRQPLRVPYHFANHV.

This sequence belongs to the DHHC palmitoyltransferase family. Widely expressed.

Its subcellular location is the golgi apparatus membrane. It localises to the golgi apparatus. The protein localises to the cis-Golgi network membrane. It is found in the cell membrane. The catalysed reaction is L-cysteinyl-[protein] + hexadecanoyl-CoA = S-hexadecanoyl-L-cysteinyl-[protein] + CoA. Functionally, palmitoyltransferase that catalyzes the addition of palmitate onto various protein substrates. Palmitoylates sex steroid hormone receptors, including ESR1, PGR and AR, thereby regulating their targeting to the plasma membrane. This affects rapid intracellular signaling by sex hormones via ERK and AKT kinases and the generation of cAMP, but does not affect that mediated by their nuclear receptor. Palmitoylates FYN, regulates its localization in hair follicles and plays a key role in epidermal homeostasis and hair follicle differentiation. Through the palmitoylation of PLCB1 and the regulation of PLCB1 downstream signaling may indirectly regulate the function of the endothelial barrier and the adhesion of leukocytes to the endothelium. Also has a palmitoyltransferase activity toward ADRA1D, positively regulating its activity and expression and may thereby play a role in vascular contraction. May also palmitoylate eNOS and LCK. In Homo sapiens (Human), this protein is Palmitoyltransferase ZDHHC21.